A 304-amino-acid polypeptide reads, in one-letter code: Prephenate dehydratase (304 aa).

Residues Arg3 to Arg178 enclose the Prephenate dehydratase domain. Residues Ser193–Arg271 enclose the ACT domain.

The enzyme catalyses prephenate + H(+) = 3-phenylpyruvate + CO2 + H2O. It participates in amino-acid biosynthesis; L-phenylalanine biosynthesis; phenylpyruvate from prephenate: step 1/1. This is Prephenate dehydratase (pheA) from Amycolatopsis methanolica.